The sequence spans 379 residues: MKSAYIHIPFCEHICHYCDFNKYFIQSQPVDEYLNALEQEMINTIAKTGQPDLKTIFIGGGTPTSLSEEQLKKLMDMINRVLKPSSDLSEFAVEANPDDLSAEKLKILKEAGVNRLSFGVQTFEDDLLEKIGRVHKQKDVFTSFERAREIGFENISLDLMFGLPGQTLKHLEHSINTALSLDAEHYSVYSLIVEPKTVFYNLMQKGRLHLPPQEQEAEMYEIVMSKMEAHGIHQYEISNFAKAGMESKHNLTYWSNEQYFGFGAGAHGYIGGTRTVNVGPVKHYIDLIAEKGFPYRDTHEVTTEEQIEEEMFLGLRKTAGVSKKRFAEKYGRSLDGLFPSVLKDLAEKGLIHNSESAVYLTHQGKLLGNEVFGAFLGEL.

Positions 1–233 constitute a Radical SAM core domain; that stretch reads MKSAYIHIPF…MSKMEAHGIH (233 aa). Residue Tyr5 coordinates S-adenosyl-L-methionine. The [4Fe-4S] cluster site is built by Cys11, Cys15, and Cys18. S-adenosyl-L-methionine-binding positions include Gly60, 61–62, Glu94, Gln121, Arg133, and Asp158; that span reads GT.

It belongs to the anaerobic coproporphyrinogen-III oxidase family. HemW subfamily. [4Fe-4S] cluster serves as cofactor.

It localises to the cytoplasm. In terms of biological role, probably acts as a heme chaperone, transferring heme to an unknown acceptor. Binds one molecule of heme per monomer, possibly covalently. Binds 1 [4Fe-4S] cluster. The cluster is coordinated with 3 cysteines and an exchangeable S-adenosyl-L-methionine. The polypeptide is Heme chaperone HemW (Bacillus subtilis (strain 168)).